The following is a 38-amino-acid chain: Phi-Lf prophage-derived putative minor coat protein (38 aa).

The sequence is that of Phi-Lf prophage-derived putative minor coat protein (gIX-1) from Xanthomonas campestris pv. campestris (strain ATCC 33913 / DSM 3586 / NCPPB 528 / LMG 568 / P 25).